The primary structure comprises 180 residues: Large ribosomal subunit protein uL6 (180 aa).

The protein belongs to the universal ribosomal protein uL6 family. As to quaternary structure, part of the 50S ribosomal subunit.

In terms of biological role, this protein binds to the 23S rRNA, and is important in its secondary structure. It is located near the subunit interface in the base of the L7/L12 stalk, and near the tRNA binding site of the peptidyltransferase center. This Bdellovibrio bacteriovorus (strain ATCC 15356 / DSM 50701 / NCIMB 9529 / HD100) protein is Large ribosomal subunit protein uL6.